We begin with the raw amino-acid sequence, 350 residues long: Kelch domain-containing protein 8A (350 aa).

Kelch repeat units follow at residues 1 to 31, 32 to 79, 81 to 127, 128 to 175, 176 to 222, 224 to 278, and 279 to 326; these read MEVP…ETGG, QVYA…ALGK, IMVI…AKDY, RVYA…LRGS, KIYV…TLDN, LYSL…GLSG, and RVIV…VFKN.

The sequence is that of Kelch domain-containing protein 8A (Klhdc8a) from Mus musculus (Mouse).